Here is a 140-residue protein sequence, read N- to C-terminus: Large ribosomal subunit protein uL11 (140 aa).

It belongs to the universal ribosomal protein uL11 family. In terms of assembly, part of the ribosomal stalk of the 50S ribosomal subunit. Interacts with L10 and the large rRNA to form the base of the stalk. L10 forms an elongated spine to which L12 dimers bind in a sequential fashion forming a multimeric L10(L12)X complex. In terms of processing, one or more lysine residues are methylated.

Functionally, forms part of the ribosomal stalk which helps the ribosome interact with GTP-bound translation factors. The sequence is that of Large ribosomal subunit protein uL11 from Nitratidesulfovibrio vulgaris (strain ATCC 29579 / DSM 644 / CCUG 34227 / NCIMB 8303 / VKM B-1760 / Hildenborough) (Desulfovibrio vulgaris).